The chain runs to 240 residues: Endonuclease NBR9 (240 aa).

Residues 1–24 are disordered; it reads MKGTGGVVVGTQNPVRDYNHSTDE. Residues 97 to 173 enclose the Smr domain; that stretch reads IDLHGLYVKE…NSGVLVLELQ (77 aa). The disordered stretch occupies residues 181 to 219; it reads GPAVNAPTNQYNAQPHPQYNNNGGQPQGQAQNYNNSGND. Low complexity predominate over residues 194–215; it reads QPHPQYNNNGGQPQGQAQNYNN.

It localises to the cytoplasm. Its function is as follows. Endonuclease involved in nonstop mRNA decay via the formation of mRNA cleavage fragments in the vicinity of stalled ribosomes. This is Endonuclease NBR9 from Saccharomyces cerevisiae (strain ATCC 204508 / S288c) (Baker's yeast).